Here is a 354-residue protein sequence, read N- to C-terminus: Protein-arginine kinase (354 aa).

Positions 24-254 (IVLSSRIRLA…QQIIQQEKMA (231 aa)) constitute a Phosphagen kinase C-terminal domain. ATP contacts are provided by residues 27 to 31 (SSRIR), H92, R125, 176 to 180 (RASVM), and 207 to 212 (RGIYGE). Positions 337–342 (RDYRRA) match the RDXXRA motif of the pArg binding pocket involved in allosteric regulation motif.

Belongs to the ATP:guanido phosphotransferase family.

It catalyses the reaction L-arginyl-[protein] + ATP = N(omega)-phospho-L-arginyl-[protein] + ADP + H(+). With respect to regulation, appears to be allosterically activated by the binding of pArg-containing polypeptides to the pArg-binding pocket localized in the C-terminal domain of McsB. In terms of biological role, catalyzes the specific phosphorylation of arginine residues in a large number of proteins. Is part of the bacterial stress response system. Protein arginine phosphorylation has a physiologically important role and is involved in the regulation of many critical cellular processes, such as protein homeostasis, motility, competence, and stringent and stress responses, by regulating gene expression and protein activity. This chain is Protein-arginine kinase, found in Bacillus cereus (strain ATCC 10987 / NRS 248).